Here is a 124-residue protein sequence, read N- to C-terminus: MMKRMVILRRCEPPPPQPAAAVVAAMGGCCGRVRYGECRRNHAARMGGHAVDGCREFLAEGEEGTGGALRCAACGCHRSFHRRVVVVQQCCACDTAAAAAAAGGWEWRDCSPESSSSASSTTAS.

The ZF-HD dimerization-type; degenerate zinc finger occupies 35-84 (YGECRRNHAARMGGHAVDGCREFLAEGEEGTGGALRCAACGCHRSFHRRV).

As to quaternary structure, homo- and heterodimers.

It is found in the cytoplasm. In terms of biological role, inhibits zinc finger homeodomain (ZHD) transcription factors, by interacting with them to prevent both their nuclear localization and their DNA-binding properties. This chain is Mini zinc finger protein 4 (MIF4), found in Oryza sativa subsp. japonica (Rice).